Here is a 118-residue protein sequence, read N- to C-terminus: Protein BEX4 (118 aa).

A disordered region spans residues 14-50; that stretch reads VEKDKKDKKGGKASKQSEEEPHHLEEVENKKPGGNVR. A compositionally biased stretch (basic and acidic residues) spans 28-44; sequence KQSEEEPHHLEEVENKK. The tract at residues 30–88 is interaction with SIRT2; it reads SEEEPHHLEEVENKKPGGNVRRKVRRLVPNFLWAIPNRHVDRNEGGEDVGRFVVQGTEV. The tract at residues 30 to 118 is interaction with alpha-tubulin; the sequence is SEEEPHHLEE…DNHYDFCLIP (89 aa). Cys115 contributes to the Zn(2+) binding site.

The protein belongs to the BEX family. As to quaternary structure, interacts with alpha-tubulin. Interacts with SIRT2. In terms of processing, ubiquitinated and degraded by the proteasome. Expressed in both Sertoli and germ cells as well as interstitial area of the testis (at protein level).

Its subcellular location is the cytoplasm. The protein localises to the cytoskeleton. It localises to the spindle pole. The protein resides in the nucleus. In terms of biological role, may play a role in microtubule deacetylation by negatively regulating the SIRT2 deacetylase activity toward alpha-tubulin and thereby participate in the control of cell cycle progression and genomic stability. In absence of reductive stress, acts as a pseudosubstrate for the CRL2(FEM1B) complex: associates with FEM1B via zinc, thereby preventing association between FEM1B and its substrates. In Mus musculus (Mouse), this protein is Protein BEX4.